The primary structure comprises 208 residues: N-(5'-phosphoribosyl)anthranilate isomerase (208 aa).

Belongs to the TrpF family.

The catalysed reaction is N-(5-phospho-beta-D-ribosyl)anthranilate = 1-(2-carboxyphenylamino)-1-deoxy-D-ribulose 5-phosphate. It participates in amino-acid biosynthesis; L-tryptophan biosynthesis; L-tryptophan from chorismate: step 3/5. This chain is N-(5'-phosphoribosyl)anthranilate isomerase, found in Deinococcus radiodurans (strain ATCC 13939 / DSM 20539 / JCM 16871 / CCUG 27074 / LMG 4051 / NBRC 15346 / NCIMB 9279 / VKM B-1422 / R1).